Reading from the N-terminus, the 578-residue chain is Cholesterol oxidase (578 aa).

FAD-binding residues include G15, E34, G85, A90, and V230. The active-site Proton acceptor is the H470. Residue G503 participates in FAD binding. A disordered region spans residues 529–551 (WPNKGETDRRPPQGEPYRRLAPI). The segment covering 533–546 (GETDRRPPQGEPYR) has biased composition (basic and acidic residues).

Belongs to the GMC oxidoreductase family. The cofactor is FAD.

It is found in the secreted. The catalysed reaction is cholesterol + O2 = cholest-5-en-3-one + H2O2. The enzyme catalyses cholest-5-en-3-one = cholest-4-en-3-one. It functions in the pathway steroid metabolism; cholesterol degradation. Bifunctional enzyme that catalyzes the oxidation and isomerization of cholesterol to cholestenone (cholest-4-en-3-one), an initial step in the cholesterol degradation process. Contributes to virulence. This is Cholesterol oxidase (choD) from Mycobacterium tuberculosis (strain CDC 1551 / Oshkosh).